A 331-amino-acid polypeptide reads, in one-letter code: UPF0194 membrane protein YbhG (331 aa).

An N-terminal signal peptide occupies residues 1–19 (MKKPVVIGLAIAAIVAVIA). Positions 107-208 (EEIAQAAAAV…LDLQDTTLIA (102 aa)) form a coiled coil.

Belongs to the UPF0194 family.

It localises to the periplasm. This is UPF0194 membrane protein YbhG from Salmonella gallinarum (strain 287/91 / NCTC 13346).